Consider the following 178-residue polypeptide: Small ribosomal subunit protein bS16 (178 aa).

Residues 78–178 (KLGITQWTAG…AAPAEGEEQA (101 aa)) are disordered. The segment covering 91–113 (KKGEPGQKAKERAEERAQREADR) has biased composition (basic and acidic residues). Low complexity predominate over residues 114-127 (AAAAAEAAAAPAEE). A compositionally biased stretch (acidic residues) spans 128 to 139 (APAEEAPAEEAA). A compositionally biased stretch (low complexity) spans 140-172 (AEAAPEAAAAEEAPAAEAAAEEAAPAAEEAAPA).

It belongs to the bacterial ribosomal protein bS16 family.

This chain is Small ribosomal subunit protein bS16, found in Phenylobacterium zucineum (strain HLK1).